The sequence spans 576 residues: V-type ATP synthase alpha chain (576 aa).

Position 238–245 (238–245) interacts with ATP; sequence GPFGAGKT.

This sequence belongs to the ATPase alpha/beta chains family.

The catalysed reaction is ATP + H2O + 4 H(+)(in) = ADP + phosphate + 5 H(+)(out). Produces ATP from ADP in the presence of a proton gradient across the membrane. The V-type alpha chain is a catalytic subunit. The protein is V-type ATP synthase alpha chain of Borrelia recurrentis (strain A1).